A 229-amino-acid chain; its full sequence is Large ribosomal subunit protein uL1 (229 aa).

It belongs to the universal ribosomal protein uL1 family. Part of the 50S ribosomal subunit.

Its function is as follows. Binds directly to 23S rRNA. The L1 stalk is quite mobile in the ribosome, and is involved in E site tRNA release. Protein L1 is also a translational repressor protein, it controls the translation of the L11 operon by binding to its mRNA. This Enterococcus faecalis (strain ATCC 700802 / V583) protein is Large ribosomal subunit protein uL1.